Reading from the N-terminus, the 229-residue chain is MDKKELVEKIALNTLVFETLGQPEKEREFTIQDLRRWGFDLILGKKNGVRTFFASQAGREVGDKWEEGGATYEIEEILLELPENKKLFAHIETSEGVAYIVAELREGKENLEILRTPAPTLLMAFFKKHRLHELANNLKSVGVITEFYKQRGRESLPLPYKKLPLVARDFLERAKKVEKMAGFGRVALAYFGKTREKDNRFRVSWLLPTIALFDIDISEKANTALEEFK.

It belongs to the UPF0128 family.

In Aquifex aeolicus (strain VF5), this protein is UPF0128 protein aq_756.